A 276-amino-acid polypeptide reads, in one-letter code: Large ribosomal subunit protein uL2 (276 aa).

Disordered regions lie at residues 29–54 (PEKS…SRRR) and 224–276 (AMNP…RGQR). Basic residues predominate over residues 256 to 276 (YKTRSKKKPSSKLIVKRRGQR).

The protein belongs to the universal ribosomal protein uL2 family. Part of the 50S ribosomal subunit. Forms a bridge to the 30S subunit in the 70S ribosome.

One of the primary rRNA binding proteins. Required for association of the 30S and 50S subunits to form the 70S ribosome, for tRNA binding and peptide bond formation. It has been suggested to have peptidyltransferase activity; this is somewhat controversial. Makes several contacts with the 16S rRNA in the 70S ribosome. In Maridesulfovibrio salexigens (strain ATCC 14822 / DSM 2638 / NCIMB 8403 / VKM B-1763) (Desulfovibrio salexigens), this protein is Large ribosomal subunit protein uL2.